A 280-amino-acid polypeptide reads, in one-letter code: Bifunctional protein FolD (280 aa).

NADP(+) contacts are provided by residues 165-167, S190, and I231; that span reads GRS.

This sequence belongs to the tetrahydrofolate dehydrogenase/cyclohydrolase family. Homodimer.

The catalysed reaction is (6R)-5,10-methylene-5,6,7,8-tetrahydrofolate + NADP(+) = (6R)-5,10-methenyltetrahydrofolate + NADPH. It catalyses the reaction (6R)-5,10-methenyltetrahydrofolate + H2O = (6R)-10-formyltetrahydrofolate + H(+). It functions in the pathway one-carbon metabolism; tetrahydrofolate interconversion. In terms of biological role, catalyzes the oxidation of 5,10-methylenetetrahydrofolate to 5,10-methenyltetrahydrofolate and then the hydrolysis of 5,10-methenyltetrahydrofolate to 10-formyltetrahydrofolate. In Moorella thermoacetica (strain ATCC 39073 / JCM 9320), this protein is Bifunctional protein FolD.